Here is a 106-residue protein sequence, read N- to C-terminus: Urease subunit beta (106 aa).

It belongs to the urease beta subunit family. Heterotrimer of UreA (gamma), UreB (beta) and UreC (alpha) subunits. Three heterotrimers associate to form the active enzyme.

The protein resides in the cytoplasm. The catalysed reaction is urea + 2 H2O + H(+) = hydrogencarbonate + 2 NH4(+). It participates in nitrogen metabolism; urea degradation; CO(2) and NH(3) from urea (urease route): step 1/1. The sequence is that of Urease subunit beta from Alkalilimnicola ehrlichii (strain ATCC BAA-1101 / DSM 17681 / MLHE-1).